Consider the following 548-residue polypeptide: Stretch-activated cation channel MID1 (548 aa).

The first 20 residues, 1–20 (MIVWQALFVVYCLFTTSIHG), serve as a signal peptide directing secretion. Topologically, residues 21-341 (LFQDFNPFAN…YLTKKISNGD (321 aa)) are extracellular. N-linked (GlcNAc...) asparagine glycans are attached at residues N32, N70, N112, N125, N159, N175, N228, N238, N265, N282, N285, N291, and N324. A helical transmembrane segment spans residues 342–358 (GLSSVGGILFSHVYFTT). The Cytoplasmic segment spans residues 359–548 (RSTDVCSLIF…LMVIHPLDDT (190 aa)).

Forms an oligomer with a molecular mass of 200 kDa by disulfide bonds. Interacts with CCH1 to form a Ca(2+) influx channel. N-glycosylated.

It localises to the cell membrane. Functionally, calcium-permeable, cation-selective stretch-activated channel (SAC) that functions together with CCH1 to mediate calcium entry into cells. Required during mating. Together with CCH1, essential for tolerance to iron stress, which leads to an increased oxidative poise, and to cold stress. This chain is Stretch-activated cation channel MID1 (MID1), found in Saccharomyces cerevisiae (strain ATCC 204508 / S288c) (Baker's yeast).